A 276-amino-acid polypeptide reads, in one-letter code: 5-deoxy-glucuronate isomerase (276 aa).

It belongs to the isomerase IolB family.

It carries out the reaction 5-deoxy-D-glucuronate = 5-dehydro-2-deoxy-D-gluconate. The protein operates within polyol metabolism; myo-inositol degradation into acetyl-CoA; acetyl-CoA from myo-inositol: step 4/7. Its function is as follows. Involved in the isomerization of 5-deoxy-glucuronate (5DG) to 5-dehydro-2-deoxy-D-gluconate (DKG or 2-deoxy-5-keto-D-gluconate). The sequence is that of 5-deoxy-glucuronate isomerase from Geobacillus kaustophilus (strain HTA426).